The sequence spans 610 residues: Elongation factor 4 (610 aa).

The 183-residue stretch at 11 to 193 folds into the tr-type G domain; that stretch reads EKIRNFSIIA…QIVEKVPAPT (183 aa). GTP contacts are provided by residues 23-28 and 140-143; these read DHGKST and NKID.

This sequence belongs to the TRAFAC class translation factor GTPase superfamily. Classic translation factor GTPase family. LepA subfamily.

The protein resides in the cell membrane. The enzyme catalyses GTP + H2O = GDP + phosphate + H(+). Required for accurate and efficient protein synthesis under certain stress conditions. May act as a fidelity factor of the translation reaction, by catalyzing a one-codon backward translocation of tRNAs on improperly translocated ribosomes. Back-translocation proceeds from a post-translocation (POST) complex to a pre-translocation (PRE) complex, thus giving elongation factor G a second chance to translocate the tRNAs correctly. Binds to ribosomes in a GTP-dependent manner. The polypeptide is Elongation factor 4 (Streptococcus pyogenes serotype M12 (strain MGAS9429)).